Reading from the N-terminus, the 305-residue chain is tRNA pseudouridine synthase B (305 aa).

Catalysis depends on aspartate 39, which acts as the Nucleophile.

Belongs to the pseudouridine synthase TruB family. Type 1 subfamily.

It catalyses the reaction uridine(55) in tRNA = pseudouridine(55) in tRNA. In terms of biological role, responsible for synthesis of pseudouridine from uracil-55 in the psi GC loop of transfer RNAs. This Staphylococcus haemolyticus (strain JCSC1435) protein is tRNA pseudouridine synthase B.